The chain runs to 155 residues: Small ribosomal subunit protein uS7c (155 aa).

The protein belongs to the universal ribosomal protein uS7 family. Part of the 30S ribosomal subunit.

The protein localises to the plastid. It is found in the chloroplast. One of the primary rRNA binding proteins, it binds directly to 16S rRNA where it nucleates assembly of the head domain of the 30S subunit. The protein is Small ribosomal subunit protein uS7c (rps7) of Marchantia polymorpha (Common liverwort).